Consider the following 276-residue polypeptide: 2-dehydro-3-deoxyphosphooctonate aldolase (276 aa).

Belongs to the KdsA family.

It is found in the cytoplasm. It catalyses the reaction D-arabinose 5-phosphate + phosphoenolpyruvate + H2O = 3-deoxy-alpha-D-manno-2-octulosonate-8-phosphate + phosphate. It functions in the pathway carbohydrate biosynthesis; 3-deoxy-D-manno-octulosonate biosynthesis; 3-deoxy-D-manno-octulosonate from D-ribulose 5-phosphate: step 2/3. The protein operates within bacterial outer membrane biogenesis; lipopolysaccharide biosynthesis. The sequence is that of 2-dehydro-3-deoxyphosphooctonate aldolase from Xanthomonas campestris pv. campestris (strain 8004).